Reading from the N-terminus, the 385-residue chain is Tyrosine--tRNA ligase 1, cytoplasmic (385 aa).

A 'HIGH' region motif is present at residues 77–85 (PSGRMHIAQ). L-tyrosine-binding residues include Y200, Q204, D207, and Q222. The 'KMSKS' region signature appears at 259–263 (KMSKS). K262 contributes to the ATP binding site.

It belongs to the class-I aminoacyl-tRNA synthetase family.

The protein localises to the cytoplasm. It localises to the cytosol. It carries out the reaction tRNA(Tyr) + L-tyrosine + ATP = L-tyrosyl-tRNA(Tyr) + AMP + diphosphate + H(+). Catalyzes the attachment of tyrosine to tRNA(Tyr) in a two-step reaction: tyrosine is first activated by ATP to form Tyr-AMP and then transferred to the acceptor end of tRNA(Tyr). This Arabidopsis thaliana (Mouse-ear cress) protein is Tyrosine--tRNA ligase 1, cytoplasmic.